The sequence spans 347 residues: tRNA N6-adenosine threonylcarbamoyltransferase (347 aa).

Fe cation is bound by residues H113 and H117. Residues 136-140 (IVSGG), D170, G183, D187, and N282 contribute to the substrate site. D310 is a Fe cation binding site.

Belongs to the KAE1 / TsaD family. It depends on Fe(2+) as a cofactor.

Its subcellular location is the cytoplasm. The enzyme catalyses L-threonylcarbamoyladenylate + adenosine(37) in tRNA = N(6)-L-threonylcarbamoyladenosine(37) in tRNA + AMP + H(+). Functionally, required for the formation of a threonylcarbamoyl group on adenosine at position 37 (t(6)A37) in tRNAs that read codons beginning with adenine. Is involved in the transfer of the threonylcarbamoyl moiety of threonylcarbamoyl-AMP (TC-AMP) to the N6 group of A37, together with TsaE and TsaB. TsaD likely plays a direct catalytic role in this reaction. The sequence is that of tRNA N6-adenosine threonylcarbamoyltransferase from Bifidobacterium adolescentis (strain ATCC 15703 / DSM 20083 / NCTC 11814 / E194a).